We begin with the raw amino-acid sequence, 240 residues long: MTSLPCPLPGRDASKAVFPDLAPVPSVAAAYPLGLSPTTAASPNLSYSRPYGHLLSYPYTEPANPGDSYLSCQQPAALSQPLCGPAEHPQELEADSEKPRLSPEPSERRPQAPAKKLRKPRTIYSSLQLQHLNQRFQHTQYLALPERAQLAAQLGLTQTQVKIWFQNKRSKYKKLLKQNSGGQEGDFPGRTFSVSPCSPPLPSLWDLPKAGTLPTSGYGNSFGAWYQHHSSDVLASPQMM.

The interval 80–120 (QPLCGPAEHPQELEADSEKPRLSPEPSERRPQAPAKKLRKP) is disordered. The span at 88–110 (HPQELEADSEKPRLSPEPSERRP) shows a compositional bias: basic and acidic residues. A DNA-binding region (homeobox) is located at residues 117 to 176 (LRKPRTIYSSLQLQHLNQRFQHTQYLALPERAQLAAQLGLTQTQVKIWFQNKRSKYKKLL).

The protein belongs to the distal-less homeobox family. Expressed in leukemia cells and placenta. Also expressed in kidney and fetal liver.

The protein resides in the nucleus. May play a role in determining the production of hemoglobin S. May act as a repressor. During embryonic development, plays a role in palatogenesis. The chain is Homeobox protein DLX-4 (DLX4) from Homo sapiens (Human).